The primary structure comprises 357 residues: Dehydrogenase FUB6 (357 aa).

Belongs to the zinc-containing alcohol dehydrogenase family. Quinone oxidoreductase subfamily.

It functions in the pathway mycotoxin biosynthesis. Functionally, dehydrogenase; part of the gene cluster that mediates the biosynthesis of fusaric acid, a mycotoxin with low to moderate toxicity to animals and humans, but with high phytotoxic properties. L-aspartate is suggested as fusaric acid amino acid precursor that is activated and further processed to O-acetyl-L-homoserine by cluster enzymes aspartate kinase FUB3 and homoserine O-acetyltransferase FUB5, as well as enzymes of the primary metabolism. The polyketide synthase (PKS) FUB1 generates the triketide trans-2-hexenal which is presumptively released by the hydrolase FUB4 and linked to the NRPS-bound amino acid precursor by NAD(P)-dependent dehydrogenase FUB6. FUB1, FUB4, and the non-canonical NRPS Fub8 may form an enzyme complex. Further processing of the NRPS-bound intermediate might be carried out by FUB6 and the O-acetylhomoserine FUB7, enabling a spontaneous electrocyclization to close the carbon backbone of fusaric acid. Dihydrofusaric acid is likely to be released via reduction by the thioester reductase (TR) domain of FUB8 whereupon the final oxidation to fusaric acid may (also) be performed by the FMN-dependent dehydrogenase FUB9. The chain is Dehydrogenase FUB6 from Gibberella moniliformis (strain M3125 / FGSC 7600) (Maize ear and stalk rot fungus).